Reading from the N-terminus, the 456-residue chain is Exodeoxyribonuclease 7 large subunit (456 aa).

It belongs to the XseA family. As to quaternary structure, heterooligomer composed of large and small subunits.

The protein resides in the cytoplasm. It carries out the reaction Exonucleolytic cleavage in either 5'- to 3'- or 3'- to 5'-direction to yield nucleoside 5'-phosphates.. In terms of biological role, bidirectionally degrades single-stranded DNA into large acid-insoluble oligonucleotides, which are then degraded further into small acid-soluble oligonucleotides. The sequence is that of Exodeoxyribonuclease 7 large subunit from Lactobacillus delbrueckii subsp. bulgaricus (strain ATCC BAA-365 / Lb-18).